Reading from the N-terminus, the 377-residue chain is Carbamoyl phosphate synthase small chain (377 aa).

Positions 1-186 (MSTPALLVLA…LGKGFVTPDE (186 aa)) are CPSase. Positions 47, 238, and 240 each coordinate L-glutamine. One can recognise a Glutamine amidotransferase type-1 domain in the interval 190 to 377 (HVVAYDFGVK…IGNMKAAKRA (188 aa)). The active-site Nucleophile is the Cys266. Positions 267, 270, 308, 310, and 311 each coordinate L-glutamine. Catalysis depends on residues His350 and Glu352.

This sequence belongs to the CarA family. In terms of assembly, composed of two chains; the small (or glutamine) chain promotes the hydrolysis of glutamine to ammonia, which is used by the large (or ammonia) chain to synthesize carbamoyl phosphate. Tetramer of heterodimers (alpha,beta)4.

It catalyses the reaction hydrogencarbonate + L-glutamine + 2 ATP + H2O = carbamoyl phosphate + L-glutamate + 2 ADP + phosphate + 2 H(+). It carries out the reaction L-glutamine + H2O = L-glutamate + NH4(+). It functions in the pathway amino-acid biosynthesis; L-arginine biosynthesis; carbamoyl phosphate from bicarbonate: step 1/1. Its pathway is pyrimidine metabolism; UMP biosynthesis via de novo pathway; (S)-dihydroorotate from bicarbonate: step 1/3. Small subunit of the glutamine-dependent carbamoyl phosphate synthetase (CPSase). CPSase catalyzes the formation of carbamoyl phosphate from the ammonia moiety of glutamine, carbonate, and phosphate donated by ATP, constituting the first step of 2 biosynthetic pathways, one leading to arginine and/or urea and the other to pyrimidine nucleotides. The small subunit (glutamine amidotransferase) binds and cleaves glutamine to supply the large subunit with the substrate ammonia. This chain is Carbamoyl phosphate synthase small chain, found in Neisseria meningitidis serogroup A / serotype 4A (strain DSM 15465 / Z2491).